Reading from the N-terminus, the 258-residue chain is Diacetyl reductase [(S)-acetoin forming] (258 aa).

An NAD(+)-binding site is contributed by 8-32; it reads LVTGGAQGIGFKIAERLVEDGFKVA. S141 contributes to the substrate binding site. Catalysis depends on Y154, which acts as the Proton acceptor. K158 is a catalytic residue.

It belongs to the short-chain dehydrogenases/reductases (SDR) family.

The enzyme catalyses (S)-acetoin + NAD(+) = diacetyl + NADH + H(+). Functionally, catalyzes the irreversible reduction of 2,3-butanediol to (S)-acetoin in the presence of NADH. The chain is Diacetyl reductase [(S)-acetoin forming] (butA) from Staphylococcus aureus (strain Mu50 / ATCC 700699).